A 120-amino-acid polypeptide reads, in one-letter code: Large ribosomal subunit protein bL12 (120 aa).

Belongs to the bacterial ribosomal protein bL12 family. Homodimer. Part of the ribosomal stalk of the 50S ribosomal subunit. Forms a multimeric L10(L12)X complex, where L10 forms an elongated spine to which 2 to 4 L12 dimers bind in a sequential fashion. Binds GTP-bound translation factors.

Functionally, forms part of the ribosomal stalk which helps the ribosome interact with GTP-bound translation factors. Is thus essential for accurate translation. The chain is Large ribosomal subunit protein bL12 from Aeromonas salmonicida (strain A449).